The chain runs to 130 residues: Small ribosomal subunit protein uS8 (130 aa).

The protein belongs to the universal ribosomal protein uS8 family. As to quaternary structure, part of the 30S ribosomal subunit. Contacts proteins S5 and S12.

One of the primary rRNA binding proteins, it binds directly to 16S rRNA central domain where it helps coordinate assembly of the platform of the 30S subunit. The polypeptide is Small ribosomal subunit protein uS8 (Klebsiella pneumoniae subsp. pneumoniae (strain ATCC 700721 / MGH 78578)).